The primary structure comprises 461 residues: UPF0210 protein Ddes_0622 (461 aa).

It belongs to the UPF0210 family. In terms of assembly, homodimer.

The sequence is that of UPF0210 protein Ddes_0622 from Desulfovibrio desulfuricans (strain ATCC 27774 / DSM 6949 / MB).